Consider the following 382-residue polypeptide: MPTPALLVLADGSVFRGFSFGAPGTAIGEVVFNTGMTGYQEVLTDPSYYGQIVTFTYPELGNTGTTPEDDESDRPQVRGAVARNICDIPSNWRSQQSLPDYLKAHRIPAIYGIDTRALTRKIRTVGAMNGGISTEILDPVELLQKVLAAPSMQGQNLAKVVTTRTPYEWTEPTPAAWEFRPQTATEEPPLTVVAIDFGVKRNILRRLASYGCRVIVVPADTPAETILSYDPDGIFLSNGPGDPAAVQEGIETTRKLLGAQRPMFGICLGHQLLGLSLGAETFKLKFGHRGLNQPAGLTQEVEITSQNHGFAITAESLAQTPVEITHFNLNDKTVAGLKHQTLPIFSVQYHPEASPGPHDADYLFGEFVAQMRAYRQQHPRRQ.

The interval 1 to 187 (MPTPALLVLA…EFRPQTATEE (187 aa)) is CPSase. Positions 47, 239, and 241 each coordinate L-glutamine. One can recognise a Glutamine amidotransferase type-1 domain in the interval 191–377 (TVVAIDFGVK…VAQMRAYRQQ (187 aa)). Cysteine 267 functions as the Nucleophile in the catalytic mechanism. Residues leucine 268, glutamine 271, asparagine 307, glycine 309, and phenylalanine 310 each coordinate L-glutamine. Active-site residues include histidine 350 and glutamate 352.

This sequence belongs to the CarA family. In terms of assembly, composed of two chains; the small (or glutamine) chain promotes the hydrolysis of glutamine to ammonia, which is used by the large (or ammonia) chain to synthesize carbamoyl phosphate. Tetramer of heterodimers (alpha,beta)4.

The catalysed reaction is hydrogencarbonate + L-glutamine + 2 ATP + H2O = carbamoyl phosphate + L-glutamate + 2 ADP + phosphate + 2 H(+). It catalyses the reaction L-glutamine + H2O = L-glutamate + NH4(+). Its pathway is amino-acid biosynthesis; L-arginine biosynthesis; carbamoyl phosphate from bicarbonate: step 1/1. It participates in pyrimidine metabolism; UMP biosynthesis via de novo pathway; (S)-dihydroorotate from bicarbonate: step 1/3. Functionally, small subunit of the glutamine-dependent carbamoyl phosphate synthetase (CPSase). CPSase catalyzes the formation of carbamoyl phosphate from the ammonia moiety of glutamine, carbonate, and phosphate donated by ATP, constituting the first step of 2 biosynthetic pathways, one leading to arginine and/or urea and the other to pyrimidine nucleotides. The small subunit (glutamine amidotransferase) binds and cleaves glutamine to supply the large subunit with the substrate ammonia. The chain is Carbamoyl phosphate synthase small chain from Thermosynechococcus vestitus (strain NIES-2133 / IAM M-273 / BP-1).